Reading from the N-terminus, the 93-residue chain is Small ribosomal subunit protein uS19 (93 aa).

Belongs to the universal ribosomal protein uS19 family.

Functionally, protein S19 forms a complex with S13 that binds strongly to the 16S ribosomal RNA. The polypeptide is Small ribosomal subunit protein uS19 (Mycobacteroides abscessus (strain ATCC 19977 / DSM 44196 / CCUG 20993 / CIP 104536 / JCM 13569 / NCTC 13031 / TMC 1543 / L948) (Mycobacterium abscessus)).